The chain runs to 276 residues: Insulin-induced gene 1 protein (276 aa).

Disordered stretches follow at residues 1 to 26 and 49 to 73; these read MPRLDDHLWRGPCAKGTKHRSHPRAS and AAHGALGTDPAHGPQSAGVGGQGSS. The Cytoplasmic portion of the chain corresponds to 1 to 83; the sequence is MPRLDDHLWR…SHVNSWHHHL (83 aa). The segment covering 16 to 25 has biased composition (basic residues); it reads GTKHRSHPRA. Residues 84–106 traverse the membrane as a helical segment; the sequence is VQRSLVLFSVGVVLALVLNLLQV. The Extracellular portion of the chain corresponds to 107–125; it reads QRNVTLFPDEVIATIFSSA. Residues 126 to 143 form a helical membrane-spanning segment; the sequence is WWVPPCCGTAAAVVGLLY. Residues 144–158 are Cytoplasmic-facing; sequence PCIDSHLGEPHKFKR. Residues Lys155 and Lys157 each participate in a glycyl lysine isopeptide (Lys-Gly) (interchain with G-Cter in ubiquitin) cross-link. The chain crosses the membrane as a helical span at residues 159 to 181; that stretch reads EWASVMRCVAVFVGINHASAKLD. Over 182–184 the chain is Extracellular; sequence FAN. A helical membrane pass occupies residues 185 to 203; it reads NVQLSLTLAALSLGLWWTF. The Cytoplasmic segment spans residues 204-208; sequence DRSRS. Ser206 carries the post-translational modification Phosphoserine. A helical transmembrane segment spans residues 209 to 230; it reads GLGLGITIAFLATLITQLLVYN. The Extracellular segment spans residues 231–244; sequence GVYQYTSPDFLYIR. Residues 245–262 traverse the membrane as a helical segment; that stretch reads SWLPCIFFSGGVTVGNIG. The Cytoplasmic segment spans residues 263 to 276; sequence RQLAMGVPEKPHSD. The short motif at 270-276 is the KxHxx element; sequence PEKPHSD.

The protein belongs to the INSIG family. As to quaternary structure, interacts with SCAP; interaction is direct and only takes place in the presence of sterols; it prevents interaction between SCAP and the coat protein complex II (COPII). Associates with the SCAP-SREBP complex (composed of SCAP and SREBF1/SREBP1 or SREBF2/SREBP2); association is mediated via its interaction with SCAP and only takes place in the presence of sterols. Interaction with SCAP is mutually exclusive with PAQR3. Interacts with HMGCR (via its SSD); the interaction, accelerated by sterols, leads to the recruitment of HMGCR to AMFR/gp78 for its ubiquitination by the sterol-mediated ERAD pathway. Interacts with AMFR/gp78 (via its membrane domain); the interaction recruits HMCR at the ER membrane for its ubiquitination and degradation by the sterol-mediated ERAD pathway. Interacts with SOAT2/ACAT2; leading to promote recruitment of AMFR/gp78 and subsequent ubiquitination of SOAT2/ACAT2. Interacts with RNF139. Interacts with RNF145. Post-translationally, phosphorylation at Ser-206 by PCK1 reduces binding to oxysterol, disrupting the interaction between INSIG1 and SCAP, thereby promoting nuclear translocation of SREBP proteins (SREBF1/SREBP1 or SREBF2/SREBP2) and subsequent transcription of downstream lipogenesis-related genes. Ubiquitinated by AMFR/gp78 in response to sterol deprivation, leading to its degradation: when the SCAP-SREBP complex becomes dissociated from INSIG1, INSIG1 is then ubiquitinated and degraded in proteasomes. Although ubiquitination is required for rapid INSIG1 degradation, it is not required for release of the SCAP-SREBP complex. Ubiquitinated by RNF139.

The protein localises to the endoplasmic reticulum membrane. In terms of biological role, oxysterol-binding protein that mediates feedback control of cholesterol synthesis by controlling both endoplasmic reticulum to Golgi transport of SCAP and degradation of HMGCR. Acts as a negative regulator of cholesterol biosynthesis by mediating the retention of the SCAP-SREBP complex in the endoplasmic reticulum, thereby blocking the processing of sterol regulatory element-binding proteins (SREBPs) SREBF1/SREBP1 and SREBF2/SREBP2. Binds oxysterol, including 25-hydroxycholesterol, regulating interaction with SCAP and retention of the SCAP-SREBP complex in the endoplasmic reticulum. In presence of oxysterol, interacts with SCAP, retaining the SCAP-SREBP complex in the endoplasmic reticulum, thereby preventing SCAP from escorting SREBF1/SREBP1 and SREBF2/SREBP2 to the Golgi. Sterol deprivation or phosphorylation by PCK1 reduce oxysterol-binding, disrupting the interaction between INSIG1 and SCAP, thereby promoting Golgi transport of the SCAP-SREBP complex, followed by processing and nuclear translocation of SREBF1/SREBP1 and SREBF2/SREBP2. Also regulates cholesterol synthesis by regulating degradation of HMGCR: initiates the sterol-mediated ubiquitin-mediated endoplasmic reticulum-associated degradation (ERAD) of HMGCR via recruitment of the reductase to the ubiquitin ligases AMFR/gp78 and/or RNF139. Also regulates degradation of SOAT2/ACAT2 when the lipid levels are low: initiates the ubiquitin-mediated degradation of SOAT2/ACAT2 via recruitment of the ubiquitin ligases AMFR/gp78. This is Insulin-induced gene 1 protein from Bos taurus (Bovine).